The chain runs to 186 residues: Intraflagellar transport protein 27 homolog (186 aa).

Residues G12–T19, D64–K68, and N123–D126 contribute to the GTP site.

This sequence belongs to the small GTPase superfamily. Rab family. In terms of assembly, component of the IFT complex B, at least composed of IFT20, IFT25, IFT27, IFT52, IFT57, IFT74, IFT81, IFT88 and TRAF3IP1. Interacts with IFT25. Interacts with IFT70B. Interacts with RABL2/RABL2A; binding is equal in the presence of GTP or GDP. Interacts with ARL6; recognizes and binds with the GTP-free form of ARL6.

The protein localises to the cell projection. It localises to the cilium. Its subcellular location is the cytoplasm. The protein resides in the flagellum. In terms of biological role, small GTPase-like component of the intraflagellar transport (IFT) complex B that promotes the exit of the BBSome complex from cilia via its interaction with ARL6. Not involved in entry of the BBSome complex into cilium. Prevents aggregation of GTP-free ARL6. Required for hedgehog signaling. Forms a subcomplex within the IFT complex B with IFT25. Its role in intraflagellar transport is mainly seen in tissues rich in ciliated cells such as kidney and testis. Essential for male fertility, spermiogenesis and sperm flagella formation. Plays a role in the early development of the kidney. May be involved in the regulation of ureteric bud initiation. The protein is Intraflagellar transport protein 27 homolog (IFT27) of Homo sapiens (Human).